Here is a 194-residue protein sequence, read N- to C-terminus: Thymidine kinase (194 aa).

ATP-binding positions include 15–22 (GSMFSGKS) and 88–91 (DEVQ). Glutamate 89 functions as the Proton acceptor in the catalytic mechanism. Residues cysteine 145, cysteine 148, cysteine 183, and histidine 186 each coordinate Zn(2+).

Belongs to the thymidine kinase family. In terms of assembly, homotetramer.

Its subcellular location is the cytoplasm. It carries out the reaction thymidine + ATP = dTMP + ADP + H(+). In Bacillus velezensis (strain DSM 23117 / BGSC 10A6 / LMG 26770 / FZB42) (Bacillus amyloliquefaciens subsp. plantarum), this protein is Thymidine kinase.